Here is a 247-residue protein sequence, read N- to C-terminus: Carboxy-S-adenosyl-L-methionine synthase (247 aa).

S-adenosyl-L-methionine contacts are provided by residues Y39, 64-66 (GCS), 89-90 (DN), 117-118 (DI), N132, and R199.

This sequence belongs to the class I-like SAM-binding methyltransferase superfamily. Cx-SAM synthase family. In terms of assembly, homodimer.

It catalyses the reaction prephenate + S-adenosyl-L-methionine = carboxy-S-adenosyl-L-methionine + 3-phenylpyruvate + H2O. Its function is as follows. Catalyzes the conversion of S-adenosyl-L-methionine (SAM) to carboxy-S-adenosyl-L-methionine (Cx-SAM). This is Carboxy-S-adenosyl-L-methionine synthase from Cronobacter sakazakii (strain ATCC BAA-894) (Enterobacter sakazakii).